The primary structure comprises 148 residues: Protein Turandot Z (148 aa).

The first 23 residues, 1-23 (MYFAIRLSFVLAVLFCLTGNGSA), serve as a signal peptide directing secretion.

Belongs to the Turandot family.

It localises to the secreted. Its function is as follows. A humoral factor that may play a role in stress tolerance. This is Protein Turandot Z from Drosophila sechellia (Fruit fly).